The chain runs to 80 residues: UPF0154 protein MGAS10270_Spy0296 (80 aa).

The chain crosses the membrane as a helical span at residues 4 to 24 (AIWILLLIVALGVGVFGGIFI).

Belongs to the UPF0154 family.

It is found in the cell membrane. The chain is UPF0154 protein MGAS10270_Spy0296 from Streptococcus pyogenes serotype M2 (strain MGAS10270).